The following is a 133-amino-acid chain: Putative biopolymer transport protein ExbD-like 2 (133 aa).

The Cytoplasmic portion of the chain corresponds to 1–9; that stretch reads MKKVESMNV. Residues 10–30 traverse the membrane as a helical segment; that stretch reads VPFIDIMLVLLVIVLTTASFV. Residues 31 to 133 lie on the Periplasmic side of the membrane; it reads QTSKLPISIP…LVEDKKNQKN (103 aa).

It belongs to the ExbD/TolR family.

Its subcellular location is the cell inner membrane. This Helicobacter pylori (strain J99 / ATCC 700824) (Campylobacter pylori J99) protein is Putative biopolymer transport protein ExbD-like 2.